The chain runs to 360 residues: Phosphate acyltransferase (360 aa).

It belongs to the PlsX family. As to quaternary structure, homodimer. Probably interacts with PlsY.

The protein localises to the cytoplasm. It catalyses the reaction a fatty acyl-[ACP] + phosphate = an acyl phosphate + holo-[ACP]. Its pathway is lipid metabolism; phospholipid metabolism. Catalyzes the reversible formation of acyl-phosphate (acyl-PO(4)) from acyl-[acyl-carrier-protein] (acyl-ACP). This enzyme utilizes acyl-ACP as fatty acyl donor, but not acyl-CoA. This is Phosphate acyltransferase from Thermobifida fusca (strain YX).